A 441-amino-acid chain; its full sequence is POC1 centriolar protein homolog A (441 aa).

7 WD repeats span residues 16–55 (GHRD…RAYR), 58–97 (GHKD…ESTA), 100–139 (AHTG…FLFS), 142–181 (QHIN…CIQS), 184–223 (EHGG…LIQH), 226–265 (VHSG…LLYT), and 268–307 (GHQG…GSYP). Residues 347-376 (DLEPHITEMSVKDRSSPLSYTSRSVDQHHP) are disordered. Residues 348–361 (LEPHITEMSVKDRS) are compositionally biased toward basic and acidic residues. Residues 400 to 427 (LTRTVGILEQRLSLTEDKLKECIEQQQA) are a coiled coil.

Belongs to the WD repeat POC1 family. As to quaternary structure, interacts with pat.

It localises to the cytoplasm. The protein localises to the cytoskeleton. In terms of biological role, may play an important role in centriole assembly and/or stability and ciliogenesis. The polypeptide is POC1 centriolar protein homolog A (poc1a) (Xenopus laevis (African clawed frog)).